A 616-amino-acid polypeptide reads, in one-letter code: DEAD-box ATP-dependent RNA helicase 53, mitochondrial (616 aa).

A mitochondrion-targeting transit peptide spans 1–81 (MITTVLRRSL…DFRASMVSQA (81 aa)). Positions 104 to 132 (LAISELGISPEIVKALSSKGIEKLFPIQK) match the Q motif motif. In terms of domain architecture, Helicase ATP-binding spans 135 to 309 (LEPAMEGRDM…KKYLNNPLTV (175 aa)). 148–155 (ARTGTGKT) contacts ATP. The DEAD box signature appears at 257-260 (DEAD). Positions 338-482 (IIGPLVTEHA…ELPSIAVERG (145 aa)) constitute a Helicase C-terminal domain. The segment at 489-616 (GIGSRSGGSF…FGSNDGKRSY (128 aa)) is disordered. 2 stretches are compositionally biased toward gly residues: residues 492 to 501 (SRSGGSFGGG) and 508 to 531 (SFGGRSGGGGYGGSSGGYGGGRSG). Low complexity-rich tracts occupy residues 532 to 568 (GSSNRYSGDSDRSGFGSFGMRSPEGYGSDRSSQSGGR) and 578 to 587 (GSSNNRSSGF).

Belongs to the DEAD box helicase family. DDX21/DDX50 subfamily.

It localises to the mitochondrion. The enzyme catalyses ATP + H2O = ADP + phosphate + H(+). The protein is DEAD-box ATP-dependent RNA helicase 53, mitochondrial (RH53) of Arabidopsis thaliana (Mouse-ear cress).